The primary structure comprises 86 residues: Photosystem I reaction center subunit PsaK (86 aa).

2 helical membrane passes run 15-35 (SWSI…IGLG) and 57-77 (GLPE…GAII).

This sequence belongs to the PsaG/PsaK family.

It is found in the plastid. It localises to the chloroplast thylakoid membrane. The protein is Photosystem I reaction center subunit PsaK of Gracilaria tenuistipitata var. liui (Red alga).